We begin with the raw amino-acid sequence, 231 residues long: MTITIALPSKGRMKDDASAIFERAGMTITAVGNDRSYRGRVEGWDDVEVAFLSASEISRELGNGTVDFGVTGEDLMREGFAEVDKRVEFCARLGFGHADVVVAVPEIWLDVDTMADLGDVAADFRARHSRRLAIATKYWRLTQQFFSSQHGIQLYRIVESLGATEGAPAAGSADIIVDITSTGSTLRANHLKVLQDGVILHSQACLVRARKESHADEPVVQAIIDAVRAAL.

It belongs to the ATP phosphoribosyltransferase family. Short subfamily. As to quaternary structure, heteromultimer composed of HisG and HisZ subunits.

The protein localises to the cytoplasm. It catalyses the reaction 1-(5-phospho-beta-D-ribosyl)-ATP + diphosphate = 5-phospho-alpha-D-ribose 1-diphosphate + ATP. It participates in amino-acid biosynthesis; L-histidine biosynthesis; L-histidine from 5-phospho-alpha-D-ribose 1-diphosphate: step 1/9. Catalyzes the condensation of ATP and 5-phosphoribose 1-diphosphate to form N'-(5'-phosphoribosyl)-ATP (PR-ATP). Has a crucial role in the pathway because the rate of histidine biosynthesis seems to be controlled primarily by regulation of HisG enzymatic activity. The sequence is that of ATP phosphoribosyltransferase (hisG) from Rhizobium etli (strain ATCC 51251 / DSM 11541 / JCM 21823 / NBRC 15573 / CFN 42).